The primary structure comprises 517 residues: Synaptic vesicular amine transporter (517 aa).

The Cytoplasmic segment spans residues 1–20; sequence MALSDLVLLRWLRDSRHSRK. The helical transmembrane segment at 21–41 threads the bilayer; that stretch reads LILFIVFLALLLDNMLLTVVV. The Extracellular portion of the chain corresponds to 42-132; the sequence is PIIPSYLYSI…EDKDLLNENV (91 aa). Residues asparagine 56, asparagine 83, asparagine 84, asparagine 91, and asparagine 113 are each glycosylated (N-linked (GlcNAc...) asparagine). Positions 100–119 are disordered; it reads ESPKATTTQHTVTNTTVPPD. Positions 105-115 are enriched in low complexity; it reads TTTQHTVTNTT. Cysteine 120 and cysteine 327 are joined by a disulfide. The chain crosses the membrane as a helical span at residues 133-153; the sequence is QVGLLFASKATVQLLTNPFIG. Residues 154–162 lie on the Cytoplasmic side of the membrane; the sequence is LLTNRIGYP. Residues 163–183 traverse the membrane as a helical segment; sequence IPMFAGFCIMFISTVMFAFSS. Over 184 to 192 the chain is Extracellular; the sequence is SYAFLLIAR. The helical transmembrane segment at 193–213 threads the bilayer; it reads SLQGIGSSCSSVAGMGMLASV. At 214 to 222 the chain is on the cytoplasmic side; that stretch reads YTDDEERGN. The chain crosses the membrane as a helical span at residues 223-245; sequence AMGIALGGLAMGVLVGPPFGSVL. Residues leucine 231 and valine 235 each contribute to the serotonin site. The Extracellular segment spans residues 246–251; that stretch reads YEFVGK. Residues 252–274 traverse the membrane as a helical segment; it reads TAPFLVLAALVLLDGAIQLFVLQ. Residues 275 to 294 lie on the Cytoplasmic side of the membrane; the sequence is PSRVQPESQKGTPLTTLLKD. A helical membrane pass occupies residues 295 to 314; sequence PYILIAAGSICFANMGIAML. Serotonin contacts are provided by asparagine 308, isoleucine 311, glutamate 315, phenylalanine 337, and tyrosine 344. The Extracellular segment spans residues 315-331; it reads EPALPIWMMETMCSRKW. The helical transmembrane segment at 332-355 threads the bilayer; it reads QLGVAFLPASISYLIGTNIFGILA. At 356–360 the chain is on the cytoplasmic side; it reads HKMGR. The helical transmembrane segment at 361–381 threads the bilayer; it reads WLCALLGMIVVGISILCIPFA. Over 382-392 the chain is Extracellular; that stretch reads KNIYGLIAPNF. The chain crosses the membrane as a helical span at residues 393–413; that stretch reads GVGFAIGMVDSSMMPIMGYLV. Position 402 (aspartate 402) interacts with serotonin. The Cytoplasmic portion of the chain corresponds to 414 to 417; that stretch reads DLRH. The chain crosses the membrane as a helical span at residues 418–438; the sequence is VSVYGSVYAIADVAFCMGYAI. Residue tyrosine 436 coordinates serotonin. The Extracellular portion of the chain corresponds to 439–443; sequence GPSAG. Residues 444-465 form a helical membrane-spanning segment; the sequence is GAIAKAIGFPWLMTIIGIIDIV. At 466–517 the chain is on the cytoplasmic side; sequence FAPLCFFLRSPPAKEEKMAILMDHNCPIKTKMYTQNNVQPYPVGDDEESESD. 2 positions are modified to phosphoserine; by CK2: serine 514 and serine 516.

The protein belongs to the major facilitator superfamily. Vesicular transporter family. Interacts with SLC6A3. In terms of tissue distribution, expressed in striata and substantia nigra.

It is found in the cytoplasmic vesicle. The protein resides in the secretory vesicle. It localises to the synaptic vesicle membrane. Its subcellular location is the secretory vesicle membrane. The protein localises to the cell projection. It is found in the axon. The protein resides in the dendrite. It catalyses the reaction serotonin(in) + 2 H(+)(out) = serotonin(out) + 2 H(+)(in). The catalysed reaction is dopamine(in) + 2 H(+)(out) = dopamine(out) + 2 H(+)(in). It carries out the reaction histamine(in) + 2 H(+)(out) = histamine(out) + 2 H(+)(in). Strongly inhibited by reserpine and tetrabenazine. Also inhibited to a lesser extent by ketanserin and fenfluramine. Reserpine and ketanserin inhibit by blocking the substrate-binding pocket. Tetrabenazine traps SLC18A2/VMAT2 in an occluded conformation and its inhibition is specific to SLC18A2/VMAT2 but not SLC18A1/VMAT1. Functionally, electrogenic antiporter that exchanges one cationic monoamine with two intravesicular protons across the membrane of secretory and synaptic vesicles. Uses the electrochemical proton gradient established by the V-type proton-pump ATPase to accumulate high concentrations of monoamines inside the vesicles prior to their release via exocytosis. Transports a variety of catecholamines such as dopamine, adrenaline and noradrenaline, histamine, and indolamines such as serotonin. Regulates the transvesicular monoaminergic gradient that determines the quantal size. Mediates somatodendritic dopamine release in hippocampal neurons, likely as part of a regulated secretory pathway that integrates retrograde synaptic signals. Acts as a primary transporter for striatal dopamine loading ensuring impulse-dependent release of dopamine at the synaptic cleft. Responsible for histamine and serotonin storage and subsequent corelease from mast cell granules. This is Synaptic vesicular amine transporter (Slc18a2) from Mus musculus (Mouse).